A 130-amino-acid chain; its full sequence is Small ribosomal subunit protein uS11 (130 aa).

This sequence belongs to the universal ribosomal protein uS11 family. As to quaternary structure, part of the 30S ribosomal subunit. Interacts with proteins S7 and S18. Binds to IF-3.

Functionally, located on the platform of the 30S subunit, it bridges several disparate RNA helices of the 16S rRNA. Forms part of the Shine-Dalgarno cleft in the 70S ribosome. In Prochlorococcus marinus (strain MIT 9215), this protein is Small ribosomal subunit protein uS11.